The sequence spans 311 residues: ADP-L-glycero-D-manno-heptose-6-epimerase (311 aa).

Residues 10-11 (FI), 31-32 (DD), lysine 38, lysine 53, 75-79 (EGACS), and asparagine 92 each bind NADP(+). The active-site Proton acceptor is tyrosine 139. Lysine 143 is a binding site for NADP(+). Asparagine 174 contributes to the substrate binding site. 2 residues coordinate NADP(+): valine 175 and lysine 183. Catalysis depends on lysine 183, which acts as the Proton acceptor. Residues serine 185, histidine 192, 206-209 (FEGE), arginine 212, and tyrosine 275 contribute to the substrate site.

Belongs to the NAD(P)-dependent epimerase/dehydratase family. HldD subfamily. As to quaternary structure, homopentamer. Requires NADP(+) as cofactor.

It catalyses the reaction ADP-D-glycero-beta-D-manno-heptose = ADP-L-glycero-beta-D-manno-heptose. It functions in the pathway nucleotide-sugar biosynthesis; ADP-L-glycero-beta-D-manno-heptose biosynthesis; ADP-L-glycero-beta-D-manno-heptose from D-glycero-beta-D-manno-heptose 7-phosphate: step 4/4. Functionally, catalyzes the interconversion between ADP-D-glycero-beta-D-manno-heptose and ADP-L-glycero-beta-D-manno-heptose via an epimerization at carbon 6 of the heptose. The polypeptide is ADP-L-glycero-D-manno-heptose-6-epimerase (Psychromonas ingrahamii (strain DSM 17664 / CCUG 51855 / 37)).